We begin with the raw amino-acid sequence, 315 residues long: WD repeat domain-containing protein 83 (315 aa).

WD repeat units lie at residues C23–T62, G65–K104, G107–I146, E151–D188, Y189–E228, V233–K272, and V275–N313.

Belongs to the WD repeat MORG1 family.

The protein localises to the cytoplasm. Functionally, molecular scaffold protein for various multimeric protein complexes. Acts as a module in the assembly of a multicomponent scaffold for the ERK pathway, linking ERK responses to specific agonists. Also involved in response to hypoxia by acting as a negative regulator of HIF1A/HIF-1-alpha. The polypeptide is WD repeat domain-containing protein 83 (wdr83) (Danio rerio (Zebrafish)).